The sequence spans 258 residues: Acetylglutamate kinase (258 aa).

Substrate-binding positions include Gly41–Gly42, Arg63, and Asn156.

This sequence belongs to the acetylglutamate kinase family. ArgB subfamily.

It is found in the cytoplasm. It carries out the reaction N-acetyl-L-glutamate + ATP = N-acetyl-L-glutamyl 5-phosphate + ADP. It participates in amino-acid biosynthesis; L-arginine biosynthesis; N(2)-acetyl-L-ornithine from L-glutamate: step 2/4. Its function is as follows. Catalyzes the ATP-dependent phosphorylation of N-acetyl-L-glutamate. The protein is Acetylglutamate kinase of Bacillus pumilus (strain SAFR-032).